The sequence spans 402 residues: Multidrug resistance protein MdtG (402 aa).

The next 11 helical transmembrane spans lie at 14-34 (LYIV…IMPF), 52-72 (LWTG…APFW), 90-110 (LGMA…QLLI), 113-133 (ALLG…ATQV), 149-169 (AVSG…LYGL), 171-191 (PVFF…LFFV), 219-239 (VICL…VTPI), 254-274 (LAFI…ISAP), 288-308 (VLIF…LVSN), 318-338 (LLGA…LYNI), and 376-396 (AVFY…WISF).

Belongs to the major facilitator superfamily. DHA1 family. MdtG (TC 2.A.1.2.20) subfamily.

The protein resides in the cell inner membrane. The sequence is that of Multidrug resistance protein MdtG from Proteus mirabilis (strain HI4320).